The following is a 66-amino-acid chain: Large ribosomal subunit protein bL33c (66 aa).

The protein belongs to the bacterial ribosomal protein bL33 family.

The protein localises to the plastid. It is found in the chloroplast. In Populus alba (White poplar), this protein is Large ribosomal subunit protein bL33c.